The primary structure comprises 273 residues: 4-hydroxy-tetrahydrodipicolinate reductase (273 aa).

NAD(+) contacts are provided by residues 12 to 17 (GAGGRM) and E38. NADP(+) is bound at residue R39. NAD(+) is bound by residues 102-104 (GTT) and 126-129 (AANF). The Proton donor/acceptor role is filled by H159. Residue H160 coordinates (S)-2,3,4,5-tetrahydrodipicolinate. K163 serves as the catalytic Proton donor. 169–170 (GT) provides a ligand contact to (S)-2,3,4,5-tetrahydrodipicolinate.

This sequence belongs to the DapB family. As to quaternary structure, homotetramer.

Its subcellular location is the cytoplasm. The enzyme catalyses (S)-2,3,4,5-tetrahydrodipicolinate + NAD(+) + H2O = (2S,4S)-4-hydroxy-2,3,4,5-tetrahydrodipicolinate + NADH + H(+). It catalyses the reaction (S)-2,3,4,5-tetrahydrodipicolinate + NADP(+) + H2O = (2S,4S)-4-hydroxy-2,3,4,5-tetrahydrodipicolinate + NADPH + H(+). Its pathway is amino-acid biosynthesis; L-lysine biosynthesis via DAP pathway; (S)-tetrahydrodipicolinate from L-aspartate: step 4/4. Catalyzes the conversion of 4-hydroxy-tetrahydrodipicolinate (HTPA) to tetrahydrodipicolinate. The protein is 4-hydroxy-tetrahydrodipicolinate reductase of Salmonella gallinarum (strain 287/91 / NCTC 13346).